We begin with the raw amino-acid sequence, 235 residues long: Protein LIFEGUARD 1 (235 aa).

Transmembrane regions (helical) follow at residues 33–53 (YSIL…VYFV), 67–87 (LAVF…LLAF), 95–115 (CIVL…CCSL), 120–140 (IVLE…IYTF), 149–169 (FSFL…FTLL), 178–198 (LSSM…IIFD), and 212–232 (ITAA…LLGI).

The protein belongs to the BI1 family. Expressed at very low in leaves.

It localises to the membrane. (Microbial infection) Facilitates the development of the powdery mildew fungus E.cruciferarum. Its function is as follows. (Microbial infection) May prevent cell death upon A.alternata f.sp. lycopersici (AAL) toxin treatment. The sequence is that of Protein LIFEGUARD 1 from Arabidopsis thaliana (Mouse-ear cress).